The sequence spans 1960 residues: Exophilin-5 (1960 aa).

The RabBD domain occupies 7–63 (GFDFSFLNEEEARKILQVLERNEELRRAEKDRISKLQKTKRDIRWLQGATGEWFEEI). 3 stretches are compositionally biased toward polar residues: residues 325-334 (ASPATGSFTA), 342-366 (DTQN…LSSI), and 635-645 (SQSSSFPDSTA). 5 disordered regions span residues 325-366 (ASPA…LSSI), 616-645 (TPAS…DSTA), 672-720 (HSTD…TGLP), 734-835 (DFQN…SSNT), and 910-976 (FSRS…KGRV). A compositionally biased stretch (low complexity) spans 673–682 (STDSLSLTDT). The segment covering 692–707 (NSEKDMDVSVSKDEQL) has biased composition (basic and acidic residues). A phosphoserine mark is found at Ser799 and Ser802. Polar residues-rich tracts occupy residues 808 to 835 (ESGT…SSNT) and 910 to 920 (FSRSLSDQDPG). The segment covering 921–932 (QEQREEKDKATK) has biased composition (basic and acidic residues). The span at 933–945 (SQDNQLAVNSTDN) shows a compositional bias: polar residues. Phosphoserine is present on Ser1027. The disordered stretch occupies residues 1035 to 1095 (QESKGTVASV…PKATKKMTDM (61 aa)). A compositionally biased stretch (polar residues) spans 1062-1074 (GKSTSDKPSSPES). Phosphoserine is present on residues Ser1083 and Ser1117. Disordered regions lie at residues 1291–1375 (AQVQ…LSRE), 1389–1493 (PLLH…DSES), and 1510–1759 (EAQP…EPHL). Over residues 1318–1336 (PESKDVSQLPDRETSKSTL) the composition is skewed to basic and acidic residues. A compositionally biased stretch (polar residues) spans 1356 to 1365 (KEISPSNVSK). Over residues 1392-1403 (HQEKGAGKEHTK) the composition is skewed to basic and acidic residues. Polar residues-rich tracts occupy residues 1470-1493 (RETS…DSES) and 1520-1533 (SEAS…TNTA). Ser1493 bears the Phosphoserine mark. 2 stretches are compositionally biased toward basic and acidic residues: residues 1534–1546 (EMRK…HMLT) and 1561–1571 (TNTDETKDRYS). Residues 1572–1586 (GKHRLAAISKASKRI) are compositionally biased toward basic residues. Residues 1637–1657 (ESSQMNVDKSETLLQETTVSS) show a composition bias toward polar residues. Phosphoserine occurs at positions 1724, 1739, 1789, and 1819. Polar residues predominate over residues 1732 to 1741 (TQKSTINSHC). Disordered stretches follow at residues 1828-1847 (ESES…STSS) and 1906-1960 (VNSP…ESEL). Over residues 1939 to 1950 (WDTDTTTDDEYY) the composition is skewed to acidic residues. A compositionally biased stretch (basic and acidic residues) spans 1951-1960 (LDEKDKESEL).

Interacts with RAB27A.

May act as Rab effector protein and play a role in vesicle trafficking. The chain is Exophilin-5 from Mus musculus (Mouse).